A 469-amino-acid polypeptide reads, in one-letter code: Argininosuccinate lyase (469 aa).

Belongs to the lyase 1 family. Argininosuccinate lyase subfamily.

It is found in the cytoplasm. The catalysed reaction is 2-(N(omega)-L-arginino)succinate = fumarate + L-arginine. Its pathway is amino-acid biosynthesis; L-arginine biosynthesis; L-arginine from L-ornithine and carbamoyl phosphate: step 3/3. The polypeptide is Argininosuccinate lyase (Burkholderia orbicola (strain MC0-3)).